The sequence spans 525 residues: Peptide chain release factor 3 (525 aa).

In terms of domain architecture, tr-type G spans 11–279 (NNRRTFAIIS…AYLKYAPKPA (269 aa)). Residues 20–27 (SHPDAGKT), 88–92 (DTPGH), and 142–145 (NKLD) contribute to the GTP site.

This sequence belongs to the TRAFAC class translation factor GTPase superfamily. Classic translation factor GTPase family. PrfC subfamily.

It localises to the cytoplasm. Increases the formation of ribosomal termination complexes and stimulates activities of RF-1 and RF-2. It binds guanine nucleotides and has strong preference for UGA stop codons. It may interact directly with the ribosome. The stimulation of RF-1 and RF-2 is significantly reduced by GTP and GDP, but not by GMP. This Ligilactobacillus salivarius (strain UCC118) (Lactobacillus salivarius) protein is Peptide chain release factor 3.